The chain runs to 78 residues: Apolipoprotein C-I (78 aa).

The N-terminal stretch at 1–26 is a signal peptide; sequence MRLILWLPVLVVVLLMVTEGPAPAQG.

It belongs to the apolipoprotein C1 family.

It localises to the secreted. Inhibitor of lipoprotein binding to the low density lipoprotein (LDL) receptor, LDL receptor-related protein, and very low density lipoprotein (VLDL) receptor. Associates with high density lipoproteins (HDL) and the triacylglycerol-rich lipoproteins in the plasma and makes up about 10% of the protein of the VLDL and 2% of that of HDL. Appears to interfere directly with fatty acid uptake and is also the major plasma inhibitor of cholesteryl ester transfer protein (CETP). Binds free fatty acids and reduces their intracellular esterification. Modulates the interaction of APOE with beta-migrating VLDL and inhibits binding of beta-VLDL to the LDL receptor-related protein. The polypeptide is Apolipoprotein C-I (APOC1) (Panthera tigris altaica (Siberian tiger)).